A 285-amino-acid polypeptide reads, in one-letter code: HTH-type transcriptional regulator MurR (285 aa).

The HTH rpiR-type domain maps to 1 to 77; it reads MLYLTKISNA…MALIGEYSAS (77 aa). The H-T-H motif DNA-binding region spans 37 to 56; the sequence is SRQMAKQLGISQSSIVKFAQ. The region spanning 128-268 is the SIS domain; sequence IIEVISKAPF…FVGLVQLNDV (141 aa).

Homotetramer.

Its pathway is amino-sugar metabolism; N-acetylmuramate degradation [regulation]. Its function is as follows. Represses the expression of the murPQ operon involved in the uptake and degradation of N-acetylmuramic acid (MurNAc). Binds to two adjacent inverted repeats within the operator region. MurNAc 6-phosphate, the substrate of MurQ, is the specific inducer that weakens binding of MurR to the operator. The sequence is that of HTH-type transcriptional regulator MurR from Escherichia coli O139:H28 (strain E24377A / ETEC).